A 113-amino-acid chain; its full sequence is Large ribosomal subunit protein uL22 (113 aa).

Belongs to the universal ribosomal protein uL22 family. In terms of assembly, part of the 50S ribosomal subunit.

This protein binds specifically to 23S rRNA; its binding is stimulated by other ribosomal proteins, e.g. L4, L17, and L20. It is important during the early stages of 50S assembly. It makes multiple contacts with different domains of the 23S rRNA in the assembled 50S subunit and ribosome. Its function is as follows. The globular domain of the protein is located near the polypeptide exit tunnel on the outside of the subunit, while an extended beta-hairpin is found that lines the wall of the exit tunnel in the center of the 70S ribosome. This Bacillus mycoides (strain KBAB4) (Bacillus weihenstephanensis) protein is Large ribosomal subunit protein uL22.